A 111-amino-acid polypeptide reads, in one-letter code: Small ribosomal subunit protein uS10 (111 aa).

This sequence belongs to the universal ribosomal protein uS10 family. Part of the 30S ribosomal subunit.

Its function is as follows. Involved in the binding of tRNA to the ribosomes. The polypeptide is Small ribosomal subunit protein uS10 (Protochlamydia amoebophila (strain UWE25)).